A 176-amino-acid polypeptide reads, in one-letter code: Ribosome maturation factor RimM (176 aa).

The 80-residue stretch at 97 to 176 (DNDFYHRDLI…QIVVDWDPDF (80 aa)) folds into the PRC barrel domain.

The protein belongs to the RimM family. As to quaternary structure, binds ribosomal protein uS19.

Its subcellular location is the cytoplasm. Its function is as follows. An accessory protein needed during the final step in the assembly of 30S ribosomal subunit, possibly for assembly of the head region. Essential for efficient processing of 16S rRNA. May be needed both before and after RbfA during the maturation of 16S rRNA. It has affinity for free ribosomal 30S subunits but not for 70S ribosomes. The protein is Ribosome maturation factor RimM of Shewanella denitrificans (strain OS217 / ATCC BAA-1090 / DSM 15013).